The primary structure comprises 500 residues: Probable cytosol aminopeptidase (500 aa).

Lysine 264 and aspartate 269 together coordinate Mn(2+). Lysine 276 is a catalytic residue. Aspartate 287, aspartate 346, and glutamate 348 together coordinate Mn(2+). Residue arginine 350 is part of the active site.

The protein belongs to the peptidase M17 family. The cofactor is Mn(2+).

The protein resides in the cytoplasm. It carries out the reaction Release of an N-terminal amino acid, Xaa-|-Yaa-, in which Xaa is preferably Leu, but may be other amino acids including Pro although not Arg or Lys, and Yaa may be Pro. Amino acid amides and methyl esters are also readily hydrolyzed, but rates on arylamides are exceedingly low.. The enzyme catalyses Release of an N-terminal amino acid, preferentially leucine, but not glutamic or aspartic acids.. In terms of biological role, presumably involved in the processing and regular turnover of intracellular proteins. Catalyzes the removal of unsubstituted N-terminal amino acids from various peptides. The protein is Probable cytosol aminopeptidase of Chlamydia abortus (strain DSM 27085 / S26/3) (Chlamydophila abortus).